The chain runs to 263 residues: Large ribosomal subunit protein uL10m (263 aa).

The transit peptide at 1 to 29 directs the protein to the mitochondrion; sequence MPFSVEVEVFFLLVEDKLGWLPTLQPVRH. Residues 241–263 form a disordered region; the sequence is QHEGDCATSTEGKPHPPDPAPDS.

Belongs to the universal ribosomal protein uL10 family. As to quaternary structure, component of the mitochondrial ribosome large subunit (39S) which comprises a 16S rRNA and about 50 distinct proteins.

The protein resides in the mitochondrion. The polypeptide is Large ribosomal subunit protein uL10m (Mrpl10) (Rattus norvegicus (Rat)).